A 336-amino-acid polypeptide reads, in one-letter code: 7,8-didemethyl-8-hydroxy-5-deazariboflavin synthase (336 aa).

The 232-residue stretch at 18–249 (ITYSPAYTLV…TSIAIQVPPN (232 aa)) folds into the Radical SAM core domain. Residues C32, C36, and C39 each coordinate [4Fe-4S] cluster.

Belongs to the radical SAM superfamily. CofG family. As to quaternary structure, consists of two subunits, CofG and CofH. Requires [4Fe-4S] cluster as cofactor.

The enzyme catalyses 5-amino-5-(4-hydroxybenzyl)-6-(D-ribitylimino)-5,6-dihydrouracil + S-adenosyl-L-methionine = 7,8-didemethyl-8-hydroxy-5-deazariboflavin + 5'-deoxyadenosine + L-methionine + NH4(+) + H(+). Its pathway is cofactor biosynthesis; coenzyme F0 biosynthesis. Catalyzes the radical-mediated synthesis of 7,8-didemethyl-8-hydroxy-5-deazariboflavin from 5-amino-5-(4-hydroxybenzyl)-6-(D-ribitylimino)-5,6-dihydrouracil. The protein is 7,8-didemethyl-8-hydroxy-5-deazariboflavin synthase of Synechococcus elongatus (strain ATCC 33912 / PCC 7942 / FACHB-805) (Anacystis nidulans R2).